Here is a 389-residue protein sequence, read N- to C-terminus: Large envelope protein (389 aa).

M1 is modified (N-acetylmethionine). A lipid anchor (N-myristoyl glycine; by host) is attached at G2. Positions 2–108 are pre-S1; it reads GTNLSVPNPL…PPLRDTHPQA (107 aa). Residues 2-163 form a pre-S region; sequence GTNLSVPNPL…LSKTGDPVPN (162 aa). Topologically, residues 2–170 are virion surface; in external conformation; it reads GTNLSVPNPL…VPNMENIASG (169 aa). Residues 2–242 lie on the Intravirion; in internal conformation side of the membrane; that stretch reads GTNLSVPNPL…PGYRWMCLRR (241 aa). The disordered stretch occupies residues 74-103; the sequence is LTTVPAAPPPASTNRQSGRQPTPLSPPLRD. Residues 85–95 are compositionally biased toward polar residues; the sequence is STNRQSGRQPT. A pre-S2 region spans residues 109-163; sequence MQWNSTTFHQTLQDPGVRALYFPAGGSSSGTVSPAQNTVSAISSILSKTGDPVPN. Residues 171–191 form a helical membrane-spanning segment; the sequence is LLGPLLVLQAGFFLLTKILTI. Residues 192-242 are Intravirion; in external conformation-facing; that stretch reads PQSLDSWWTSLNFLGGTPVCLGQNSQSQISSHSPTCCPPICPGYRWMCLRR. A helical transmembrane segment spans residues 243 to 263; sequence FIIFLCILLLCLIFLLVLLDY. Residues 264–337 lie on the Virion surface side of the membrane; the sequence is QGMLPVCPLI…WASVRFSWLS (74 aa). Residue N309 is glycosylated (N-linked (GlcNAc...) asparagine; by host). A helical membrane pass occupies residues 338 to 358; sequence LLVPFVQWFVGLSPTVWLSVI. The Intravirion segment spans residues 359–364; sequence WMIWFW. Residues 365-387 form a helical membrane-spanning segment; the sequence is GPSLYNILSPFMPLLPIFFCLWV. Topologically, residues 388–389 are virion surface; that stretch reads YI.

Belongs to the orthohepadnavirus major surface antigen family. In terms of assembly, interacts (via its myristoylated pre-S1 region) with the host SLC10A1/NTCP; this interaction is essential for viral entry. In its internal form (Li-HBsAg), interacts with the capsid protein and with the isoform S. Interacts with host chaperone CANX. As to quaternary structure, associates with host chaperone CANX through its pre-S2 N glycan; this association may be essential for isoform M proper secretion. In terms of assembly, interacts with isoform L. Interacts with the antigens of satellite virus HDV (HDVAgs); this interaction is required for encapsidation of HDV genomic RNA. Isoform M is N-terminally acetylated by host at a ratio of 90%, and N-glycosylated by host at the pre-S2 region. In terms of processing, myristoylated; this modification is essential for its interaction with the host protein SLC10A1/NTCP.

The protein resides in the virion membrane. Functionally, the large envelope protein exists in two topological conformations, one which is termed 'external' or Le-HBsAg and the other 'internal' or Li-HBsAg. In its external conformation the protein attaches the virus to cell receptors and thereby initiating infection. This interaction determines the species specificity and liver tropism. This attachment induces virion internalization predominantly through caveolin-mediated endocytosis. The large envelope protein also assures fusion between virion membrane and endosomal membrane. In its internal conformation the protein plays a role in virion morphogenesis and mediates the contact with the nucleocapsid like a matrix protein. The middle envelope protein plays an important role in the budding of the virion. It is involved in the induction of budding in a nucleocapsid independent way. In this process the majority of envelope proteins bud to form subviral lipoprotein particles of 22 nm of diameter that do not contain a nucleocapsid. The protein is Large envelope protein of Hepatitis B virus genotype B/C subtype adw (isolate Okinawa/pODW282/1998) (HBV-B).